The primary structure comprises 243 residues: Uridine-cytidine kinase B (243 aa).

Gly-22 to Thr-29 is an ATP binding site.

This sequence belongs to the uridine kinase family.

It carries out the reaction uridine + ATP = UMP + ADP + H(+). The enzyme catalyses cytidine + ATP = CMP + ADP + H(+). It functions in the pathway pyrimidine metabolism; CTP biosynthesis via salvage pathway; CTP from cytidine: step 1/3. Its pathway is pyrimidine metabolism; UMP biosynthesis via salvage pathway; UMP from uridine: step 1/1. Functionally, catalyzes the conversion of uridine into uridine monophosphate and cytidine into cytidine monophosphate in the pyrimidine salvage pathway. This Dictyostelium discoideum (Social amoeba) protein is Uridine-cytidine kinase B (udkB).